Reading from the N-terminus, the 525-residue chain is Probable lipid II flippase MurJ (525 aa).

14 consecutive transmembrane segments (helical) span residues 10-30 (LLKS…LGLV), 32-52 (DVVV…FFAN), 100-120 (VLVT…TALF), 140-160 (LASL…FVAL), 171-191 (FAVS…CAWY), 203-223 (LAIG…PFLI), 247-267 (MIPA…DSFV), 285-305 (LLEF…LPAL), 330-350 (FLGI…LMVL), 368-388 (LLAY…APGY), 402-422 (IIAM…YGYV), 423-443 (GLAV…YRGL), 455-475 (TVWF…ALLW), and 495-515 (LTGL…LLGV).

This sequence belongs to the MurJ/MviN family.

It localises to the cell inner membrane. Its pathway is cell wall biogenesis; peptidoglycan biosynthesis. Functionally, involved in peptidoglycan biosynthesis. Transports lipid-linked peptidoglycan precursors from the inner to the outer leaflet of the cytoplasmic membrane. This chain is Probable lipid II flippase MurJ, found in Vibrio cholerae serotype O1 (strain ATCC 39315 / El Tor Inaba N16961).